Reading from the N-terminus, the 324-residue chain is Beta-ketoacyl-[acyl-carrier-protein] synthase III (324 aa).

Active-site residues include cysteine 114 and histidine 251. The ACP-binding stretch occupies residues 252 to 256; it reads QANKR. Asparagine 281 is an active-site residue.

This sequence belongs to the thiolase-like superfamily. FabH family. In terms of assembly, homodimer.

Its subcellular location is the cytoplasm. It catalyses the reaction malonyl-[ACP] + acetyl-CoA + H(+) = 3-oxobutanoyl-[ACP] + CO2 + CoA. Its pathway is lipid metabolism; fatty acid biosynthesis. Its function is as follows. Catalyzes the condensation reaction of fatty acid synthesis by the addition to an acyl acceptor of two carbons from malonyl-ACP. Catalyzes the first condensation reaction which initiates fatty acid synthesis and may therefore play a role in governing the total rate of fatty acid production. Possesses both acetoacetyl-ACP synthase and acetyl transacylase activities. Its substrate specificity determines the biosynthesis of branched-chain and/or straight-chain of fatty acids. The chain is Beta-ketoacyl-[acyl-carrier-protein] synthase III from Bradyrhizobium sp. (strain BTAi1 / ATCC BAA-1182).